Reading from the N-terminus, the 372-residue chain is Putative glutamate--cysteine ligase 2 (372 aa).

It belongs to the glutamate--cysteine ligase type 2 family. YbdK subfamily.

It carries out the reaction L-cysteine + L-glutamate + ATP = gamma-L-glutamyl-L-cysteine + ADP + phosphate + H(+). In terms of biological role, ATP-dependent carboxylate-amine ligase which exhibits weak glutamate--cysteine ligase activity. The chain is Putative glutamate--cysteine ligase 2 from Rhodopirellula baltica (strain DSM 10527 / NCIMB 13988 / SH1).